The primary structure comprises 156 residues: tRNA (cytidine(34)-2'-O)-methyltransferase (156 aa).

Positions 102, 124, and 132 each coordinate S-adenosyl-L-methionine.

Belongs to the class IV-like SAM-binding methyltransferase superfamily. RNA methyltransferase TrmH family. TrmL subfamily. In terms of assembly, homodimer.

Its subcellular location is the cytoplasm. The enzyme catalyses cytidine(34) in tRNA + S-adenosyl-L-methionine = 2'-O-methylcytidine(34) in tRNA + S-adenosyl-L-homocysteine + H(+). The catalysed reaction is 5-carboxymethylaminomethyluridine(34) in tRNA(Leu) + S-adenosyl-L-methionine = 5-carboxymethylaminomethyl-2'-O-methyluridine(34) in tRNA(Leu) + S-adenosyl-L-homocysteine + H(+). Methylates the ribose at the nucleotide 34 wobble position in the two leucyl isoacceptors tRNA(Leu)(CmAA) and tRNA(Leu)(cmnm5UmAA). Catalyzes the methyl transfer from S-adenosyl-L-methionine to the 2'-OH of the wobble nucleotide. The protein is tRNA (cytidine(34)-2'-O)-methyltransferase of Burkholderia pseudomallei (strain 1106a).